The following is a 492-amino-acid chain: B3 domain-containing protein REM3 (492 aa).

The segment at residues 12–104 (NRPFFVRSLA…VFHVTPSGRS (93 aa)) is a DNA-binding region (TF-B3 1). Low complexity predominate over residues 105–116 (FSQIRTSSSSGD). A disordered region spans residues 105–134 (FSQIRTSSSSGDYDSDDDDDEAGDDDSDSK). Acidic residues predominate over residues 117-131 (YDSDDDDDEAGDDDS). 2 DNA-binding regions (TF-B3) span residues 154 to 250 (YCLL…LCFK) and 286 to 382 (FLTV…FCSE). Positions 385 to 395 (IEQEEAPEERG) are enriched in basic and acidic residues. The tract at residues 385 to 427 (IEQEEAPEERGTPLPKRARVSAEVGHSRRTQAPNKSSDDPKIL) is disordered.

It localises to the nucleus. The sequence is that of B3 domain-containing protein REM3 (REM3) from Arabidopsis thaliana (Mouse-ear cress).